The chain runs to 346 residues: Probable aldo-keto reductase 2 (346 aa).

Tyr-63 functions as the Proton donor in the catalytic mechanism. Substrate is bound at residue His-131. 210-220 (SPLGRGFLAAG) lines the NADP(+) pocket.

Belongs to the aldo/keto reductase family. Aldo/keto reductase 13 subfamily.

The chain is Probable aldo-keto reductase 2 (AGD2) from Arabidopsis thaliana (Mouse-ear cress).